A 476-amino-acid chain; its full sequence is Cysteine--tRNA ligase (476 aa).

Residue Cys28 coordinates Zn(2+). Positions 30-40 match the 'HIGH' region motif; that stretch reads PTVYDHTHLGH. 3 residues coordinate Zn(2+): Cys208, His233, and Glu237. Residues 265–269 carry the 'KMSKS' region motif; the sequence is KMSKS. Lys268 is an ATP binding site.

It belongs to the class-I aminoacyl-tRNA synthetase family. Zn(2+) serves as cofactor.

It localises to the cytoplasm. It carries out the reaction tRNA(Cys) + L-cysteine + ATP = L-cysteinyl-tRNA(Cys) + AMP + diphosphate. This is Cysteine--tRNA ligase from Methanococcus maripaludis (strain C7 / ATCC BAA-1331).